Reading from the N-terminus, the 281-residue chain is Plasmanylethanolamine desaturase (281 aa).

Topologically, residues 1-28 are cytoplasmic; the sequence is MKTQEIEKKVRQQDAQVLAQGYSPAIRA. The chain crosses the membrane as a helical span at residues 29–45; that stretch reads MEIAAIVSFVSLEVALV. The Periplasmic portion of the chain corresponds to 46–58; the sequence is YRLWGTPYAGTWL. Residues 59 to 75 form a helical membrane-spanning segment; the sequence is LLSAVLLGYLAADFVSG. Residues 76 to 123 lie on the Cytoplasmic side of the membrane; the sequence is FVHWMGDTWGSTEMPVLGKALIRPFREHHVDEKAITRHDFVETNGNNC. The helical transmembrane segment at 124-138 threads the bilayer; that stretch reads LISLPVAIIALCLPM. Over 139 to 142 the chain is Periplasmic; the sequence is SGPG. The chain crosses the membrane as a helical span at residues 143-159; that stretch reads WVFCASFLGAMIFWVMA. At 160-281 the chain is on the cytoplasmic side; that stretch reads TNQFHKWSHM…VQEKPASTRP (122 aa). Positions 164–168 match the Histidine box-1 motif; sequence HKWSH. The short motif at 191–195 is the Histidine box-2 element; it reads HRIHH.

Belongs to the fatty acid desaturase CarF family. In terms of assembly, interacts with CarR.

Its subcellular location is the cell inner membrane. The catalysed reaction is a 1-(1,2-saturated alkyl)-2-acyl-sn-glycero-3-phosphoethanolamine + 2 Fe(II)-[cytochrome b5] + O2 + 2 H(+) = a 1-O-(1Z-alkenyl)-2-acyl-sn-glycero-3-phosphoethanolamine + 2 Fe(III)-[cytochrome b5] + 2 H2O. It catalyses the reaction 1-O-(13-methyltetradecyl)-2-(13-methyltetradecanoyl)-sn-glycero-3-phosphoethanolamine + 2 Fe(II)-[cytochrome b5] + O2 + 2 H(+) = 1-O-(1Z-13-methyltetradecenyl)-2-(13-methyltetradecanoyl)-sn-glycero-3-phosphoethanolamine + 2 Fe(III)-[cytochrome b5] + 2 H2O. Plasmanylethanolamine desaturase involved in plasmalogen biogenesis in the membrane, required for light-induced carotenogenesis. Plasmalogens are glycerophospholipids with a hydrocarbon chain linked by a vinyl ether bond at the glycerol sn-1 position, and are involved in antioxidative and signaling mechanisms, most precisely in sensing photooxidative stress through singlet oxygen. Participates in the light-dependent inactivation of the antisigma factor CarR. Mediates signaling by singlet oxygen, generated via photoexcited protoporphyrin IX. The polypeptide is Plasmanylethanolamine desaturase (Myxococcus xanthus).